We begin with the raw amino-acid sequence, 467 residues long: UPF0236 protein TTE0033/TTE0744/TTE0838/TTE0852/TTE1082/TTE1247/TTE1519/TTE1678/TTE1739/TTE1823/TTE2212 (467 aa).

It belongs to the UPF0236 family.

The polypeptide is UPF0236 protein TTE0033/TTE0744/TTE0838/TTE0852/TTE1082/TTE1247/TTE1519/TTE1678/TTE1739/TTE1823/TTE2212 (Caldanaerobacter subterraneus subsp. tengcongensis (strain DSM 15242 / JCM 11007 / NBRC 100824 / MB4) (Thermoanaerobacter tengcongensis)).